The sequence spans 427 residues: Endothelin-1 receptor (427 aa).

The signal sequence occupies residues 1 to 20 (MSIFCLAAYFWLTMVGGVMA). The Extracellular segment spans residues 21-80 (DNPERYSANLSSHMEDFTPFPGTEINFLGTTHRPPNLALPSNGSMHGYCPQQTKITTAFK). N-linked (GlcNAc...) asparagine glycosylation is found at Asn29 and Asn62. A helical membrane pass occupies residues 81 to 102 (YINTVISCTIFIVGMVGNATLL). Residues 103–112 (RIIYQNKCMR) lie on the Cytoplasmic side of the membrane. The helical transmembrane segment at 113-132 (NGPNALIASLALGDLIYVVI) threads the bilayer. The Extracellular segment spans residues 133 to 159 (DLPINVFKLLAGRWPFDHNDFGVFLCK). Residues Cys158 and Cys239 are joined by a disulfide bond. The chain crosses the membrane as a helical span at residues 160–181 (LFPFLQKSSVGITVLNLCALSV). Topologically, residues 182-205 (DRYRAVASWSRVQGIGIPLITAIE) are cytoplasmic. The helical transmembrane segment at 206-229 (IVSIWILSFILAIPEAIGFVMVPF) threads the bilayer. The Extracellular segment spans residues 230–256 (EYKGELHRTCMLNATSKFMEFYQDVKD). An N-linked (GlcNAc...) asparagine glycan is attached at Asn242. The helical transmembrane segment at 257-278 (WWLFGFYFCMPLVCTAIFYTLM) threads the bilayer. Topologically, residues 279–306 (TCEMLNRRNGSLRIALSEHLKQRREVAK) are cytoplasmic. Residues 307–328 (TVFCLVVIFALCWFPLHLSRIL) form a helical membrane-spanning segment. The Extracellular segment spans residues 329–347 (KKTVYDEMDKNRCELLSFL). Residues 348 to 372 (LLMDYIGINLATMNSCINPIALYFV) traverse the membrane as a helical segment. Topologically, residues 373-427 (SKKFKNCFQSCLCCCCHQSKSLMTSVPMNGTSIQWKNQEQNNHNTERSSHKDSMN) are cytoplasmic. The disordered stretch occupies residues 408 to 427 (KNQEQNNHNTERSSHKDSMN). The segment covering 416–427 (NTERSSHKDSMN) has biased composition (basic and acidic residues). At Ser425 the chain carries Phosphoserine.

It belongs to the G-protein coupled receptor 1 family. Endothelin receptor subfamily. EDNRA sub-subfamily. Interacts with HDAC7 and KAT5.

It localises to the cell membrane. In terms of biological role, receptor for endothelin-1. Mediates its action by association with G proteins that activate a phosphatidylinositol-calcium second messenger system. The rank order of binding affinities for ET-A is: ET1 &gt; ET2 &gt;&gt; ET3. The chain is Endothelin-1 receptor from Mus musculus (Mouse).